We begin with the raw amino-acid sequence, 301 residues long: Glycine--tRNA ligase alpha subunit (301 aa).

The protein belongs to the class-II aminoacyl-tRNA synthetase family. Tetramer of two alpha and two beta subunits.

The protein resides in the cytoplasm. The catalysed reaction is tRNA(Gly) + glycine + ATP = glycyl-tRNA(Gly) + AMP + diphosphate. The polypeptide is Glycine--tRNA ligase alpha subunit (Alteromonas mediterranea (strain DSM 17117 / CIP 110805 / LMG 28347 / Deep ecotype)).